The primary structure comprises 81 residues: Protein RALF-like 6 (81 aa).

The signal sequence occupies residues 1–29 (MAAHKKSHIRIFFVSVMIILSLFSGFGEG). 2 disulfides stabilise this stretch: Cys46–Cys54 and Cys66–Cys72.

It belongs to the plant rapid alkalinization factor (RALF) family.

Its subcellular location is the secreted. In terms of biological role, cell signaling peptide that may regulate plant stress, growth, and development. Mediates a rapid alkalinization of extracellular space by mediating a transient increase in the cytoplasmic Ca(2+) concentration leading to a calcium-dependent signaling events through a cell surface receptor and a concomitant activation of some intracellular mitogen-activated protein kinases. The protein is Protein RALF-like 6 (RALFL6) of Arabidopsis thaliana (Mouse-ear cress).